The following is a 410-amino-acid chain: Gamma-glutamyl phosphate reductase (410 aa).

This sequence belongs to the gamma-glutamyl phosphate reductase family.

It localises to the cytoplasm. The enzyme catalyses L-glutamate 5-semialdehyde + phosphate + NADP(+) = L-glutamyl 5-phosphate + NADPH + H(+). It participates in amino-acid biosynthesis; L-proline biosynthesis; L-glutamate 5-semialdehyde from L-glutamate: step 2/2. Catalyzes the NADPH-dependent reduction of L-glutamate 5-phosphate into L-glutamate 5-semialdehyde and phosphate. The product spontaneously undergoes cyclization to form 1-pyrroline-5-carboxylate. The polypeptide is Gamma-glutamyl phosphate reductase (Campylobacter jejuni subsp. jejuni serotype O:23/36 (strain 81-176)).